Here is a 465-residue protein sequence, read N- to C-terminus: MDRMEIDDQAGIDFVTESINSERARNRWSTSHIPSLSEINPSSFQSPSPSPFASSTSLASKPARYSKPLGLFVLDTNFLLSHLSLCQNLIEFLTARCPRLVVVLPWTVLQELDGLKSESSSTCGYLARQAHNFLLQCFRSNVSSLRGQKVHEHCSSTEKGDDAILDCCIYYQEEKLIPAVLLSDDKNLSIKAAVHHIQSLSFSKGLEAASIVQTSFPSAFSSNSENLENLSMDIDLTVSQPLATATNHRNQGASTVDIPMDRTHDNSIWASRYAHFPPYDKKKDTTRSAADYIPYTYTALTKEEILHASHPRACKLLDQITKIMVEETAFLLSRHLLKLWGDYDLAMTKLLASPQFPPQNINDVGHELYIHWYTCFDGYLPAQERSNLKSKAELWNEWMLWAERGIGIGPKNQEELQTYVTFWSNIWTLLSRREILGDQASTYIGFREQNIEKWVERSGRERILS.

The region spanning 70 to 190 (GLFVLDTNFL…LLSDDKNLSI (121 aa)) is the PINc domain.

This sequence belongs to the SWT1 family.

It localises to the cytoplasm. The protein localises to the nucleus. Involved in transcription. This chain is Transcriptional protein swt1, found in Schizosaccharomyces pombe (strain 972 / ATCC 24843) (Fission yeast).